Here is a 296-residue protein sequence, read N- to C-terminus: Maltose/maltodextrin transport system permease protein MalG (296 aa).

The Cytoplasmic segment spans residues 1-12; it reads MAMVQPKSQKLR. Residues 13–35 traverse the membrane as a helical segment; the sequence is LLITHLGLLIFIAAIMFPLLMVI. Topologically, residues 36 to 88 are periplasmic; that stretch reads AISLREGNFATGSLIPDKISWEHWRLALGFSVEHADGRVTPPPFPVLLWLWNS. The ABC transmembrane type-1 domain occupies 85-281; sequence LWNSVKIAGI…IPITLVFLLA (197 aa). A helical transmembrane segment spans residues 89–111; sequence VKIAGITAIGIVALSTTCAYAFA. At 112-123 the chain is on the cytoplasmic side; that stretch reads RMRFPGKATLLK. The helical transmembrane segment at 124 to 143 threads the bilayer; it reads GMLIFQMFPAVLSLVALYAL. Residues 144 to 152 are Periplasmic-facing; it reads FDRLGQYIP. The helical transmembrane segment at 153–175 threads the bilayer; the sequence is FIGLNTHGGVIFAYLGGIALHVW. The Cytoplasmic portion of the chain corresponds to 176–204; it reads TIKGYFETIDSSLEEAAALDGATPWQAFR. A helical transmembrane segment spans residues 205–227; sequence LVLLPLSVPILAVVFILSFIAAI. Residues 228 to 257 lie on the Periplasmic side of the membrane; sequence TEVPVASLLLRDVDSYTLAVGMQQYLNPQN. A helical transmembrane segment spans residues 258–280; sequence YLWGDFAAAAVLSAIPITLVFLL. The Cytoplasmic portion of the chain corresponds to 281–296; that stretch reads AQRWLVNGLTAGGVKG.

The protein belongs to the binding-protein-dependent transport system permease family. MalFG subfamily. As to quaternary structure, the complex is composed of two ATP-binding proteins (MalK), two transmembrane proteins (MalG and MalF) and a solute-binding protein (MalE).

It is found in the cell inner membrane. Functionally, part of the ABC transporter complex MalEFGK involved in maltose/maltodextrin import. Probably responsible for the translocation of the substrate across the membrane. The chain is Maltose/maltodextrin transport system permease protein MalG (malG) from Salmonella typhimurium (strain LT2 / SGSC1412 / ATCC 700720).